A 265-amino-acid chain; its full sequence is tRNA (guanine-N(7)-)-methyltransferase (265 aa).

The disordered stretch occupies residues 1–40 (MIHDDDPNAPGAPHDDDATAAPASATRAAPAAGDDDDANP). The span at 19-32 (TAAPASATRAAPAA) shows a compositional bias: low complexity. S-adenosyl-L-methionine contacts are provided by Glu95, Glu120, Asp147, and Asp170. The active site involves Asp170. Substrate contacts are provided by residues Lys174, Asp206, and 241–244 (TKFE).

It belongs to the class I-like SAM-binding methyltransferase superfamily. TrmB family.

The catalysed reaction is guanosine(46) in tRNA + S-adenosyl-L-methionine = N(7)-methylguanosine(46) in tRNA + S-adenosyl-L-homocysteine. Its pathway is tRNA modification; N(7)-methylguanine-tRNA biosynthesis. Functionally, catalyzes the formation of N(7)-methylguanine at position 46 (m7G46) in tRNA. In Burkholderia pseudomallei (strain 1710b), this protein is tRNA (guanine-N(7)-)-methyltransferase.